The following is a 66-amino-acid chain: Large ribosomal subunit protein bL33c (66 aa).

This sequence belongs to the bacterial ribosomal protein bL33 family.

Its subcellular location is the plastid. The protein resides in the chloroplast. The polypeptide is Large ribosomal subunit protein bL33c (Calycanthus floridus var. glaucus (Eastern sweetshrub)).